A 342-amino-acid chain; its full sequence is 3-isopropylmalate dehydrogenase (342 aa).

Residues Arg92, Arg102, Arg126, and Asp216 each coordinate substrate. Residues Asp216, Asp240, and Asp244 each contribute to the Mg(2+) site. 276 to 288 (GSAPDIAGKGIAD) is an NAD(+) binding site.

Belongs to the isocitrate and isopropylmalate dehydrogenases family. LeuB type 2 subfamily. Homodimer. Mg(2+) is required as a cofactor. The cofactor is Mn(2+).

The protein localises to the cytoplasm. The enzyme catalyses (2R,3S)-3-isopropylmalate + NAD(+) = 4-methyl-2-oxopentanoate + CO2 + NADH. It participates in amino-acid biosynthesis; L-leucine biosynthesis; L-leucine from 3-methyl-2-oxobutanoate: step 3/4. In terms of biological role, catalyzes the oxidation of 3-carboxy-2-hydroxy-4-methylpentanoate (3-isopropylmalate) to 3-carboxy-4-methyl-2-oxopentanoate. The product decarboxylates to 4-methyl-2 oxopentanoate. This is 3-isopropylmalate dehydrogenase from Corynebacterium kroppenstedtii (strain DSM 44385 / JCM 11950 / CIP 105744 / CCUG 35717).